The chain runs to 351 residues: MTIAIGQNQERGLFDLVDDWLKRDRFVFVGWSGILLFPTAYLAAGGWFTGTTFVTSWYTHGLASSYLEGCNFLTAAVSTPANSMGHSLLLLWGPEAQGDFTRWCQIGGLWAFIALHGAFGLIGFCLRQFEIARLVGIRPYNAIAFSGPIAVFVSVFLLYPLGQASWFFAPSFGVAAIFRFLLFLQGFHNWTLNPFHMMGVAGILGGALLCAIHGATVENTLFEDGDAANTFRAFTPTQSEETYSMVTANRFWSQIFGVAFSNKRWLHFFMLFVPVAGLWTSSIGIVGLALNLRAYDFVSQELRAAEDPEFETFYTKNILLNEGIRSWMAAQDQPHENFVFPEEVLPRGNAL.

Residues 39-59 (TAYLAAGGWFTGTTFVTSWYT) form a helical membrane-spanning segment. H116 contacts chlorophyll a. Residues 123-139 (GFCLRQFEIARLVGIRP) traverse the membrane as a helical segment. The pheophytin a site is built by Q128 and N141. Residues 151–164 (VFVSVFLLYPLGQA) form a helical membrane-spanning segment. Position 196 (H196) interacts with chlorophyll a. A helical membrane pass occupies residues 206 to 226 (GALLCAIHGATVENTLFEDGD). H213 and F260 together coordinate a plastoquinone. H213 contacts Fe cation. H267 is a Fe cation binding site. A helical transmembrane segment spans residues 277 to 293 (GLWTSSIGIVGLALNLR).

This sequence belongs to the reaction center PufL/M/PsbA/D family. PSII is composed of 1 copy each of membrane proteins PsbA, PsbB, PsbC, PsbD, PsbE, PsbF, PsbH, PsbI, PsbJ, PsbK, PsbL, PsbM, PsbT, PsbX, PsbY, PsbZ, Psb30/Ycf12, at least 3 peripheral proteins of the oxygen-evolving complex and a large number of cofactors. It forms dimeric complexes. The D1/D2 heterodimer binds P680, chlorophylls that are the primary electron donor of PSII, and subsequent electron acceptors. It shares a non-heme iron and each subunit binds pheophytin, quinone, additional chlorophylls, carotenoids and lipids. There is also a Cl(-1) ion associated with D1 and D2, which is required for oxygen evolution. The PSII complex binds additional chlorophylls, carotenoids and specific lipids. serves as cofactor.

Its subcellular location is the plastid. The protein localises to the chloroplast thylakoid membrane. It carries out the reaction 2 a plastoquinone + 4 hnu + 2 H2O = 2 a plastoquinol + O2. Photosystem II (PSII) is a light-driven water:plastoquinone oxidoreductase that uses light energy to abstract electrons from H(2)O, generating O(2) and a proton gradient subsequently used for ATP formation. It consists of a core antenna complex that captures photons, and an electron transfer chain that converts photonic excitation into a charge separation. The D1/D2 (PsbA/PsbD) reaction center heterodimer binds P680, the primary electron donor of PSII as well as several subsequent electron acceptors. D2 is needed for assembly of a stable PSII complex. The protein is Photosystem II D2 protein of Thalassiosira pseudonana (Marine diatom).